Consider the following 161-residue polypeptide: Anthranilate 1,2-dioxygenase small subunit (161 aa).

Belongs to the bacterial ring-hydroxylating dioxygenase beta subunit family. Part of a multicomponent enzyme system composed of a reductase (AndAa), a ferredoxin (AndAb) and a two-subunit oxygenase component (AndAc and AndAd).

The catalysed reaction is anthranilate + NADH + O2 + 3 H(+) = catechol + NH4(+) + CO2 + NAD(+). It carries out the reaction anthranilate + NADPH + O2 + 3 H(+) = catechol + NH4(+) + CO2 + NADP(+). Its pathway is aromatic compound metabolism; anthranilate degradation via hydroxylation; catechol from anthranilate: step 1/1. Its function is as follows. Oxygenase component of anthranilate dioxygenase multicomponent enzyme system which catalyzes the incorporation of both atoms of molecular oxygen into anthranilate to form catechol. Can also act on benzoate and salicylate but not on 2-chlorobenzoate or o-toluate. In Burkholderia cepacia (Pseudomonas cepacia), this protein is Anthranilate 1,2-dioxygenase small subunit.